Here is a 2119-residue protein sequence, read N- to C-terminus: Outer kinetochore KNL1 complex subunit KNL1 (2119 aa).

The interval 1–59 (MDGVYSEANEENDNTQRPVRRQHSSILKPPRSPLQDLKCGNQTNQEPNPPRKRKSSRRV) is disordered. The tract at residues 1–202 (MDGVYSEANE…SDNFIKRLKT (202 aa)) is may mediate oligomerization. Interaction with microtubules stretches follow at residues 17–34 (RPVR…RSPL) and 53–80 (RKSS…ERNS). Positions 23 to 80 (HSSILKPPRSPLQDLKCGNQTNQEPNPPRKRKSSRRVSFADTIKVFQTESHMKTERNS) are interaction with PP1CA; contains the protein phosphatase 1 (PP1) interaction motifs SILK, RVXF and phi-phi. Residues Ser24, Ser32, and Ser60 each carry the phosphoserine modification. The interval 124–140 (ENQMDLTASHTVMITKG) is interaction with BUB1. The interval 160–179 (ENLKHHAANSRIKKDLACST) is interaction with BUB1B. The residue at position 538 (Ser538) is a Phosphoserine. Residues Thr540 and Thr739 each carry the phosphothreonine modification. Copy 1 of the repeat occupies 723–827 (DKTILFSEGN…MTKSHTVFID (105 aa)). Residues 723-1027 (DKTILFSEGN…VTRSHTVFID (305 aa)) form a 2 X 104 AA approximate repeats region. 2 positions are modified to phosphoserine: Ser794 and Ser878. The stretch at 923-1027 (KSITFPENDK…VTRSHTVFID (105 aa)) is repeat 2. 2 positions are modified to phosphoserine: Ser1243 and Ser1464. The tract at residues 1557–1583 (SQRESLPSENKTENCRAQKRTRVEEND) is disordered. Basic and acidic residues predominate over residues 1566 to 1583 (NKTENCRAQKRTRVEEND). The Nuclear localization signal signature appears at 1577 to 1590 (TRVEENDVTNEKKI). Phosphoserine is present on residues Ser1616, Ser1627, and Ser1642. The segment at 1763–1890 (KVKDYSDEEL…FLEVETQKTQ (128 aa)) is required for interaction with ZWINT. Residues 1799-1890 (VALYNKLVHS…FLEVETQKTQ (92 aa)) adopt a coiled-coil conformation. An interaction with NSL1, DSN1 and required for assembly into the outer kinetochore region spans residues 1873-2093 (EEEELQRKFL…GKTGHDEIAA (221 aa)).

Component of the KNL1 complex composed of KNL1 and ZWINT. Part of the ten-subunit outer kinetochore KMN network that includes the KNL1, MIS12 and NDC80 complexes; a bioriented kinetochore contains approximately 150 copies of the network. Interacts (via C-terminus) with the MIS12 complex subunits NSL1 (via C-terminus), PMF1 and DSN1; the interaction is direct. Interacts (via N-terminal region) with BUB1B (via BUB1 N-terminal domain); the interaction is direct and is required for cell cycle arrest upon activation of the mitotic spindle assembly checkpoint. Interacts (via N-terminal region) with BUB1 (via BUB1 N-terminal domain); the interaction is direct. Interacts with the protein phosphatase PP1 subunit PPP1CA; the interaction is direct and mutually exclusive with binding to microtubules. Interacts with the protein phosphatase PP1 subunit PPP1CC; the interaction is direct and mutually exclusive with binding to microtubules. Post-translationally, phosphorylation by AURKB negatively regulates its interaction with protein phosphatase 1 (PP1) subunit PPP1CA and with microtubules. As to expression, expressed in oocytes during meiotic progression (at protein level). Expressed during spermatogenesis.

The protein resides in the nucleus. The protein localises to the chromosome. It is found in the centromere. Its subcellular location is the kinetochore. It localises to the cytoplasm. Acts as a component of the outer kinetochore KNL1 complex that serves as a docking point for spindle assembly checkpoint components and mediates microtubule-kinetochore interactions. Kinetochores, consisting of a centromere-associated inner segment and a microtubule-contacting outer segment, play a crucial role in chromosome segregation by mediating the physical connection between centromeric DNA and spindle microtubules. The outer kinetochore is made up of the ten-subunit KMN network, comprising the MIS12, NDC80 and KNL1 complexes, and auxiliary microtubule-associated components; together they connect the outer kinetochore with the inner kinetochore, bind microtubules, and mediate interactions with mitotic checkpoint proteins that delay anaphase until chromosomes are bioriented on the spindle. Required for kinetochore binding by a distinct subset of kMAPs (kinetochore-bound microtubule-associated proteins) and motors. Acts in coordination with CENPK to recruit the NDC80 complex to the outer kinetochore. Can bind either to microtubules or to the protein phosphatase 1 (PP1) catalytic subunits PPP1CA and PPP1CC (via overlapping binding sites), it has higher affinity for PP1. Recruits MAD2L1 to the kinetochore and also directly links BUB1 and BUB1B to the kinetochore. In addition to orienting mitotic chromosomes, it is also essential for alignment of homologous chromosomes during meiotic metaphase I. In meiosis I, required to activate the spindle assembly checkpoint at unattached kinetochores to correct erroneous kinetochore-microtubule attachments. In Mus musculus (Mouse), this protein is Outer kinetochore KNL1 complex subunit KNL1.